A 170-amino-acid chain; its full sequence is MSQLPVVLGAGLNTGDIIFQLIAMLILLALLKKFALKPLLGIMKQREDYIGNEISSAEQKHVQAEKLLEEQRVLLKEAREESHTLIENAKKIGEKQKEEIIQAARQESERLKDSARTEIVKEKEQAVAALREQVASLSVLIASKVIERELDEQAQEKLIQEYLKEAGESR.

Residues 11–31 traverse the membrane as a helical segment; the sequence is GLNTGDIIFQLIAMLILLALL.

It belongs to the ATPase B chain family. As to quaternary structure, F-type ATPases have 2 components, F(1) - the catalytic core - and F(0) - the membrane proton channel. F(1) has five subunits: alpha(3), beta(3), gamma(1), delta(1), epsilon(1). F(0) has three main subunits: a(1), b(2) and c(10-14). The alpha and beta chains form an alternating ring which encloses part of the gamma chain. F(1) is attached to F(0) by a central stalk formed by the gamma and epsilon chains, while a peripheral stalk is formed by the delta and b chains.

It localises to the cell membrane. Functionally, f(1)F(0) ATP synthase produces ATP from ADP in the presence of a proton or sodium gradient. F-type ATPases consist of two structural domains, F(1) containing the extramembraneous catalytic core and F(0) containing the membrane proton channel, linked together by a central stalk and a peripheral stalk. During catalysis, ATP synthesis in the catalytic domain of F(1) is coupled via a rotary mechanism of the central stalk subunits to proton translocation. Component of the F(0) channel, it forms part of the peripheral stalk, linking F(1) to F(0). The polypeptide is ATP synthase subunit b (Bacillus pumilus (strain SAFR-032)).